Reading from the N-terminus, the 1090-residue chain is UPF0507 protein SCY_4172 (1090 aa).

Residues Phe289–Asn436 form the VPS9 domain.

Belongs to the UPF0507 family.

The chain is UPF0507 protein SCY_4172 from Saccharomyces cerevisiae (strain YJM789) (Baker's yeast).